The sequence spans 804 residues: Leucine--tRNA ligase (804 aa).

The 'HIGH' region signature appears at Pro-39–His-50. The 'KMSKS' region motif lies at Lys-573–Ser-577. Lys-576 is an ATP binding site.

The protein belongs to the class-I aminoacyl-tRNA synthetase family.

Its subcellular location is the cytoplasm. The enzyme catalyses tRNA(Leu) + L-leucine + ATP = L-leucyl-tRNA(Leu) + AMP + diphosphate. This chain is Leucine--tRNA ligase, found in Lactobacillus delbrueckii subsp. bulgaricus (strain ATCC BAA-365 / Lb-18).